Consider the following 325-residue polypeptide: Elongation factor Ts, mitochondrial (325 aa).

Residues 1–45 constitute a mitochondrion transit peptide; the sequence is MSLLRSLRVFLVARTGSYPAGSLLRQSPQPRHTFYAGPRLSASAS. Lys76, Lys133, and Lys192 each carry N6-succinyllysine. Residue Ser270 is modified to Phosphoserine. A Phosphothreonine modification is found at Thr324.

It belongs to the EF-Ts family. Expressed in all tissues, with the highest levels of expression in skeletal muscle, liver and kidney.

Its subcellular location is the mitochondrion. Associates with the EF-Tu.GDP complex and induces the exchange of GDP to GTP. It remains bound to the aminoacyl-tRNA.EF-Tu.GTP complex up to the GTP hydrolysis stage on the ribosome. The sequence is that of Elongation factor Ts, mitochondrial from Homo sapiens (Human).